The chain runs to 555 residues: Formate--tetrahydrofolate ligase (555 aa).

65 to 72 lines the ATP pocket; that stretch reads TPAGEGKS.

Belongs to the formate--tetrahydrofolate ligase family.

It carries out the reaction (6S)-5,6,7,8-tetrahydrofolate + formate + ATP = (6R)-10-formyltetrahydrofolate + ADP + phosphate. It participates in one-carbon metabolism; tetrahydrofolate interconversion. This chain is Formate--tetrahydrofolate ligase, found in Staphylococcus aureus (strain Mu3 / ATCC 700698).